The primary structure comprises 474 residues: Ribulose bisphosphate carboxylase large chain (474 aa).

Proline 2 bears the N-acetylproline mark. Position 13 is an N6,N6,N6-trimethyllysine (lysine 13). Substrate contacts are provided by asparagine 122 and threonine 172. Lysine 174 (proton acceptor) is an active-site residue. Position 176 (lysine 176) interacts with substrate. Residues lysine 200, aspartate 202, and glutamate 203 each coordinate Mg(2+). Lysine 200 carries the N6-carboxylysine modification. Histidine 293 acts as the Proton acceptor in catalysis. Substrate contacts are provided by arginine 294, histidine 326, and serine 378.

Belongs to the RuBisCO large chain family. Type I subfamily. In terms of assembly, heterohexadecamer of 8 large chains and 8 small chains; disulfide-linked. The disulfide link is formed within the large subunit homodimers. It depends on Mg(2+) as a cofactor. In terms of processing, the disulfide bond which can form in the large chain dimeric partners within the hexadecamer appears to be associated with oxidative stress and protein turnover.

It is found in the plastid. It localises to the chloroplast. It carries out the reaction 2 (2R)-3-phosphoglycerate + 2 H(+) = D-ribulose 1,5-bisphosphate + CO2 + H2O. It catalyses the reaction D-ribulose 1,5-bisphosphate + O2 = 2-phosphoglycolate + (2R)-3-phosphoglycerate + 2 H(+). In terms of biological role, ruBisCO catalyzes two reactions: the carboxylation of D-ribulose 1,5-bisphosphate, the primary event in carbon dioxide fixation, as well as the oxidative fragmentation of the pentose substrate in the photorespiration process. Both reactions occur simultaneously and in competition at the same active site. The protein is Ribulose bisphosphate carboxylase large chain of Oltmannsiellopsis viridis (Marine flagellate).